We begin with the raw amino-acid sequence, 339 residues long: Uroporphyrinogen decarboxylase (339 aa).

Substrate contacts are provided by residues 21 to 25 (RQAGR), Asp71, Tyr147, Ser202, and His315.

The protein belongs to the uroporphyrinogen decarboxylase family. As to quaternary structure, homodimer.

It is found in the cytoplasm. The catalysed reaction is uroporphyrinogen III + 4 H(+) = coproporphyrinogen III + 4 CO2. It participates in porphyrin-containing compound metabolism; protoporphyrin-IX biosynthesis; coproporphyrinogen-III from 5-aminolevulinate: step 4/4. Functionally, catalyzes the decarboxylation of four acetate groups of uroporphyrinogen-III to yield coproporphyrinogen-III. The chain is Uroporphyrinogen decarboxylase from Helicobacter pylori (strain G27).